Reading from the N-terminus, the 203-residue chain is Guanylate kinase (203 aa).

In terms of domain architecture, Guanylate kinase-like spans 5–184 (GMLIVLSGPS…AVQRIEKIIE (180 aa)). 12 to 19 (GPSGVGKG) contacts ATP.

Belongs to the guanylate kinase family.

It is found in the cytoplasm. It carries out the reaction GMP + ATP = GDP + ADP. Its function is as follows. Essential for recycling GMP and indirectly, cGMP. This is Guanylate kinase from Latilactobacillus sakei subsp. sakei (strain 23K) (Lactobacillus sakei subsp. sakei).